We begin with the raw amino-acid sequence, 374 residues long: Calcium/calmodulin-dependent protein kinase type 1 (374 aa).

The Protein kinase domain maps to 20-276; it reads YDFRDVLGTG…CEQALQHPWI (257 aa). ATP-binding positions include 26–34 and Lys-49; that span reads LGTGAFSEV. Residue Lys-59 forms a Glycyl lysine isopeptide (Lys-Gly) (interchain with G-Cter in ubiquitin) linkage. Asp-141 (proton acceptor) is an active-site residue. Thr-177 is modified (phosphothreonine; by CaMKK1 and CaMKK2). The tract at residues 276-316 is autoinhibitory domain; it reads IAGDTALDKNIHQSVSEQIKKNFAKSKWKQAFNATAVVRHM. The calmodulin-binding stretch occupies residues 296 to 317; sequence KNFAKSKWKQAFNATAVVRHMR. Residues 315–321 carry the Nuclear export signal motif; sequence HMRKLQL.

The protein belongs to the protein kinase superfamily. CAMK Ser/Thr protein kinase family. CaMK subfamily. In terms of assembly, monomer. Interacts with XPO1. Post-translationally, phosphorylated by CaMKK1 and CaMKK2 on Thr-177. Polybiquitinated by the E3 ubiquitin-protein ligase complex SCF(FBXL12), leading to proteasomal degradation. In terms of tissue distribution, ubiquitous.

It is found in the cytoplasm. The protein resides in the nucleus. The enzyme catalyses L-seryl-[protein] + ATP = O-phospho-L-seryl-[protein] + ADP + H(+). It carries out the reaction L-threonyl-[protein] + ATP = O-phospho-L-threonyl-[protein] + ADP + H(+). Its activity is regulated as follows. Activated by Ca(2+)/calmodulin. Binding of calmodulin results in conformational change that relieves intrasteric autoinhibition and allows phosphorylation of Thr-177 within the activation loop by CaMKK1 or CaMKK2. Phosphorylation of Thr-177 results in several fold increase in total activity. Unlike CaMK4, is unable to exhibit autonomous activity after Ca(2+)/calmodulin activation. Calcium/calmodulin-dependent protein kinase that operates in the calcium-triggered CaMKK-CaMK1 signaling cascade and, upon calcium influx, regulates transcription activators activity, cell cycle, hormone production, cell differentiation, actin filament organization and neurite outgrowth. Recognizes the substrate consensus sequence [MVLIF]-x-R-x(2)-[ST]-x(3)-[MVLIF]. Regulates axonal extension and growth cone motility in hippocampal and cerebellar nerve cells. Upon NMDA receptor-mediated Ca(2+) elevation, promotes dendritic growth in hippocampal neurons and is essential in synapses for full long-term potentiation (LTP) and ERK2-dependent translational activation. Downstream of NMDA receptors, promotes the formation of spines and synapses in hippocampal neurons by phosphorylating ARHGEF7/BETAPIX on 'Ser-673', which results in the enhancement of ARHGEF7 activity and activation of RAC1. Promotes neuronal differentiation and neurite outgrowth by activation and phosphorylation of MARK2 on 'Ser-91', 'Ser-92', 'Ser-93' and 'Ser-294'. Promotes nuclear export of HDAC5 and binding to 14-3-3 by phosphorylation of 'Ser-259' and 'Ser-498' in the regulation of muscle cell differentiation. Regulates NUMB-mediated endocytosis by phosphorylation of NUMB on 'Ser-276' and 'Ser-295'. Involved in the regulation of basal and estrogen-stimulated migration of medulloblastoma cells through ARHGEF7/BETAPIX phosphorylation. Is required for proper activation of cyclin-D1/CDK4 complex during G1 progression in diploid fibroblasts. Plays a role in K(+) and ANG2-mediated regulation of the aldosterone synthase (CYP11B2) to produce aldosterone in the adrenal cortex. Phosphorylates EIF4G3/eIF4GII. In vitro phosphorylates CREB1, ATF1, CFTR, MYL9 and SYN1/synapsin I. In Mus musculus (Mouse), this protein is Calcium/calmodulin-dependent protein kinase type 1 (Camk1).